The sequence spans 141 residues: Ribosome-binding factor A (141 aa).

Belongs to the RbfA family. Monomer. Binds 30S ribosomal subunits, but not 50S ribosomal subunits or 70S ribosomes.

The protein localises to the cytoplasm. In terms of biological role, one of several proteins that assist in the late maturation steps of the functional core of the 30S ribosomal subunit. Associates with free 30S ribosomal subunits (but not with 30S subunits that are part of 70S ribosomes or polysomes). Required for efficient processing of 16S rRNA. May interact with the 5'-terminal helix region of 16S rRNA. This is Ribosome-binding factor A from Beijerinckia indica subsp. indica (strain ATCC 9039 / DSM 1715 / NCIMB 8712).